Consider the following 277-residue polypeptide: Phosphate import ATP-binding protein PstB (277 aa).

The ABC transporter domain maps to 31–272; it reads IEVPGLSLFY…PAKKQTEDYI (242 aa). 63–70 contributes to the ATP binding site; the sequence is GPSGCGKS.

It belongs to the ABC transporter superfamily. Phosphate importer (TC 3.A.1.7) family. As to quaternary structure, the complex is composed of two ATP-binding proteins (PstB), two transmembrane proteins (PstC and PstA) and a solute-binding protein (PstS).

It localises to the cell inner membrane. It carries out the reaction phosphate(out) + ATP + H2O = ADP + 2 phosphate(in) + H(+). In terms of biological role, part of the ABC transporter complex PstSACB involved in phosphate import. Responsible for energy coupling to the transport system. The protein is Phosphate import ATP-binding protein PstB of Pseudomonas putida (Arthrobacter siderocapsulatus).